We begin with the raw amino-acid sequence, 196 residues long: Peptide deformylase (196 aa).

Fe cation is bound by residues C105 and H147. The active site involves E148. H151 provides a ligand contact to Fe cation.

The protein belongs to the polypeptide deformylase family. The cofactor is Fe(2+).

It catalyses the reaction N-terminal N-formyl-L-methionyl-[peptide] + H2O = N-terminal L-methionyl-[peptide] + formate. Its function is as follows. Removes the formyl group from the N-terminal Met of newly synthesized proteins. Requires at least a dipeptide for an efficient rate of reaction. N-terminal L-methionine is a prerequisite for activity but the enzyme has broad specificity at other positions. The sequence is that of Peptide deformylase from Flavobacterium johnsoniae (strain ATCC 17061 / DSM 2064 / JCM 8514 / BCRC 14874 / CCUG 350202 / NBRC 14942 / NCIMB 11054 / UW101) (Cytophaga johnsonae).